A 413-amino-acid chain; its full sequence is Ribulose bisphosphate carboxylase/oxygenase activase, chloroplastic (413 aa).

The transit peptide at 1–54 (MAATVSTIGAVNRTTLNNSNYGGLVPNSAFLGSRLKVSSRFTTSKMVTGNFKIV) directs the protein to the chloroplast. Residue 162 to 169 (GGKGQGKS) participates in ATP binding.

The protein belongs to the RuBisCO activase family.

It is found in the plastid. The protein resides in the chloroplast stroma. Functionally, activation of RuBisCO (ribulose-1,5-bisphosphate carboxylase/oxygenase; EC 4.1.1.39) involves the ATP-dependent carboxylation of the epsilon-amino group of lysine leading to a carbamate structure. The chain is Ribulose bisphosphate carboxylase/oxygenase activase, chloroplastic from Cucumis sativus (Cucumber).